The primary structure comprises 185 residues: Ribosome-recycling factor (185 aa).

The protein belongs to the RRF family.

The protein resides in the cytoplasm. Responsible for the release of ribosomes from messenger RNA at the termination of protein biosynthesis. May increase the efficiency of translation by recycling ribosomes from one round of translation to another. This Campylobacter jejuni subsp. jejuni serotype O:23/36 (strain 81-176) protein is Ribosome-recycling factor.